Here is an 85-residue protein sequence, read N- to C-terminus: Ice-structuring protein 4 (85 aa).

Positions 1–21 are cleaved as a signal peptide; that stretch reads MRITEANPDPDAKAVPAAAAP.

Belongs to the type-I AFP family.

It localises to the secreted. In terms of biological role, contributes to protect fish blood from freezing at subzero sea water temperatures. Lowers the blood freezing point. Binds to nascent ice crystals and prevents further growth. This chain is Ice-structuring protein 4, found in Pseudopleuronectes americanus (Winter flounder).